The primary structure comprises 89 residues: Putative RING finger protein 121R (89 aa).

Residues 45 to 78 form an RING-type zinc finger; it reads CPICLIAKVNTVLECTHVLCSNCVKKINVCPICR.

In Invertebrate iridescent virus 6 (IIV-6), this protein is Putative RING finger protein 121R.